A 1366-amino-acid polypeptide reads, in one-letter code: DNA-directed RNA polymerase subunit beta'' (1366 aa).

Positions 220, 291, 298, and 301 each coordinate Zn(2+).

This sequence belongs to the RNA polymerase beta' chain family. RpoC2 subfamily. As to quaternary structure, in plastids the minimal PEP RNA polymerase catalytic core is composed of four subunits: alpha, beta, beta', and beta''. When a (nuclear-encoded) sigma factor is associated with the core the holoenzyme is formed, which can initiate transcription. Requires Zn(2+) as cofactor.

It localises to the plastid. The protein resides in the chloroplast. The catalysed reaction is RNA(n) + a ribonucleoside 5'-triphosphate = RNA(n+1) + diphosphate. Its function is as follows. DNA-dependent RNA polymerase catalyzes the transcription of DNA into RNA using the four ribonucleoside triphosphates as substrates. This chain is DNA-directed RNA polymerase subunit beta'', found in Phaseolus vulgaris (Kidney bean).